The chain runs to 1019 residues: Enteropeptidase (1019 aa).

Gly-2 carries N-myristoyl glycine lipidation. Over 2–18 (GSKRGISSRHHSLSSYE) the chain is Cytoplasmic. The chain crosses the membrane as a helical; Signal-anchor for type II membrane protein span at residues 19–47 (IMFAALFAILVVLCAGLIAVSCLTIKESQ). The Extracellular portion of the chain corresponds to 48–1019 (RGAALGQSHE…FTEWIQSFLH (972 aa)). The SEA domain maps to 54 to 169 (QSHEARATFK…NSVDILDKLT (116 aa)). 3 N-linked (GlcNAc...) asparagine glycosylation sites follow: Asn-116, Asn-147, and Asn-179. The region spanning 182–223 (IECLPGSSPCTDALTCIKADLFCDGEVNCPDGSDEDNKMCAT) is the LDL-receptor class A 1 domain. 4 disulfide bridges follow: Cys-184-Cys-197, Cys-191-Cys-210, Cys-204-Cys-221, and Cys-225-Cys-253. A CUB 1 domain is found at 225-334 (CDGRFLLTGS…VGFNATYTAF (110 aa)). Asn-328, Asn-335, Asn-388, Asn-440, Asn-470, Asn-503, Asn-534, and Asn-630 each carry an N-linked (GlcNAc...) asparagine glycan. An MAM domain is found at 342–504 (YEKINCNFED…ISLTYGICNG (163 aa)). Cys-524 and Cys-552 are disulfide-bonded. In terms of domain architecture, CUB 2 spans 524-634 (CGGPFELWEP…GGFKANFTTG (111 aa)). In terms of domain architecture, LDL-receptor class A 2 spans 641 to 679 (EPCKADHFQCKNGECVPLVNLCDGHLHCEDGSDEADCVR). 3 cysteine pairs are disulfide-bonded: Cys-643/Cys-655, Cys-650/Cys-668, and Cys-662/Cys-677. An SRCR domain is found at 678–771 (VRFFNGTTNN…LIRLQCNHKS (94 aa)). N-linked (GlcNAc...) asparagine glycosylation is found at Asn-682, Asn-706, and Asn-725. Intrachain disulfides connect Cys-757-Cys-767, Cys-772-Cys-896, and Cys-810-Cys-826. The Peptidase S1 domain occupies 785–1019 (IVGGSNAKEG…FTEWIQSFLH (235 aa)). Catalysis depends on His-825, which acts as the Charge relay system. An N-linked (GlcNAc...) asparagine glycan is attached at Asn-848. Asp-876 (charge relay system) is an active-site residue. N-linked (GlcNAc...) asparagine glycans are attached at residues Asn-887, Asn-909, and Asn-949. 3 disulfides stabilise this stretch: Cys-910-Cys-977, Cys-941-Cys-956, and Cys-967-Cys-995. Residue Ser-971 is the Charge relay system of the active site.

This sequence belongs to the peptidase S1 family. Heterodimer of a catalytic (light) chain and a multidomain (heavy) chain linked by a disulfide bond. The chains are derived from a single precursor that is cleaved by a trypsin-like protease. As to expression, intestinal brush border.

Its subcellular location is the membrane. The enzyme catalyses Activation of trypsinogen by selective cleavage of 6-Lys-|-Ile-7 bond.. Responsible for initiating activation of pancreatic proteolytic proenzymes (trypsin, chymotrypsin and carboxypeptidase A). It catalyzes the conversion of trypsinogen to trypsin which in turn activates other proenzymes including chymotrypsinogen, procarboxypeptidases, and proelastases. This chain is Enteropeptidase (TMPRSS15), found in Homo sapiens (Human).